We begin with the raw amino-acid sequence, 403 residues long: Phosphopentomutase 2 (403 aa).

Mn(2+) is bound by residues D13, D298, H303, D339, H340, and H351.

The protein belongs to the phosphopentomutase family. Mn(2+) serves as cofactor.

It localises to the cytoplasm. The catalysed reaction is 2-deoxy-alpha-D-ribose 1-phosphate = 2-deoxy-D-ribose 5-phosphate. It catalyses the reaction alpha-D-ribose 1-phosphate = D-ribose 5-phosphate. Its pathway is carbohydrate degradation; 2-deoxy-D-ribose 1-phosphate degradation; D-glyceraldehyde 3-phosphate and acetaldehyde from 2-deoxy-alpha-D-ribose 1-phosphate: step 1/2. In terms of biological role, isomerase that catalyzes the conversion of deoxy-ribose 1-phosphate (dRib-1-P) and ribose 1-phosphate (Rib-1-P) to deoxy-ribose 5-phosphate (dRib-5-P) and ribose 5-phosphate (Rib-5-P), respectively. The chain is Phosphopentomutase 2 from Streptococcus agalactiae serotype Ia (strain ATCC 27591 / A909 / CDC SS700).